The chain runs to 145 residues: 6-pyruvoyl tetrahydrobiopterin synthase (145 aa).

Ser19 carries the phosphoserine modification. His24 contacts Zn(2+). Residue Ser28 is modified to Phosphoserine. Cys43 acts as the Proton acceptor in catalysis. Zn(2+) is bound by residues His49 and His51. Catalysis depends on His90, which acts as the Charge relay system. Phosphotyrosine is present on Tyr128. The active-site Charge relay system is the Glu134.

It belongs to the PTPS family. In terms of assembly, homohexamer formed of two homotrimers in a head to head fashion. Requires Zn(2+) as cofactor. Post-translationally, phosphorylation of Ser-19 is required for maximal enzyme activity.

The catalysed reaction is 7,8-dihydroneopterin 3'-triphosphate = 6-pyruvoyl-5,6,7,8-tetrahydropterin + triphosphate + H(+). It functions in the pathway cofactor biosynthesis; tetrahydrobiopterin biosynthesis; tetrahydrobiopterin from 7,8-dihydroneopterin triphosphate: step 1/3. In terms of biological role, involved in the biosynthesis of tetrahydrobiopterin, an essential cofactor of aromatic amino acid hydroxylases. Catalyzes the transformation of 7,8-dihydroneopterin triphosphate into 6-pyruvoyl tetrahydropterin. This Pongo abelii (Sumatran orangutan) protein is 6-pyruvoyl tetrahydrobiopterin synthase (PTS).